A 617-amino-acid polypeptide reads, in one-letter code: Proline--tRNA ligase (617 aa).

This sequence belongs to the class-II aminoacyl-tRNA synthetase family. ProS type 1 subfamily. In terms of assembly, homodimer.

Its subcellular location is the cytoplasm. It catalyses the reaction tRNA(Pro) + L-proline + ATP = L-prolyl-tRNA(Pro) + AMP + diphosphate. Its function is as follows. Catalyzes the attachment of proline to tRNA(Pro) in a two-step reaction: proline is first activated by ATP to form Pro-AMP and then transferred to the acceptor end of tRNA(Pro). As ProRS can inadvertently accommodate and process non-cognate amino acids such as alanine and cysteine, to avoid such errors it has two additional distinct editing activities against alanine. One activity is designated as 'pretransfer' editing and involves the tRNA(Pro)-independent hydrolysis of activated Ala-AMP. The other activity is designated 'posttransfer' editing and involves deacylation of mischarged Ala-tRNA(Pro). The misacylated Cys-tRNA(Pro) is not edited by ProRS. This Treponema pallidum (strain Nichols) protein is Proline--tRNA ligase.